The sequence spans 166 residues: Large ribosomal subunit protein uL10 (166 aa).

This sequence belongs to the universal ribosomal protein uL10 family. In terms of assembly, part of the ribosomal stalk of the 50S ribosomal subunit. The N-terminus interacts with L11 and the large rRNA to form the base of the stalk. The C-terminus forms an elongated spine to which L12 dimers bind in a sequential fashion forming a multimeric L10(L12)X complex.

In terms of biological role, forms part of the ribosomal stalk, playing a central role in the interaction of the ribosome with GTP-bound translation factors. This is Large ribosomal subunit protein uL10 from Streptococcus sanguinis (strain SK36).